The sequence spans 183 residues: Shikimate kinase (183 aa).

ATP is bound at residue 14-19 (GAGKTT). Threonine 18 is a Mg(2+) binding site. 3 residues coordinate substrate: aspartate 36, arginine 60, and glycine 82. Arginine 120 contributes to the ATP binding site. Arginine 139 provides a ligand contact to substrate. Position 156 (glutamine 156) interacts with ATP.

It belongs to the shikimate kinase family. In terms of assembly, monomer. Requires Mg(2+) as cofactor.

Its subcellular location is the cytoplasm. It carries out the reaction shikimate + ATP = 3-phosphoshikimate + ADP + H(+). It participates in metabolic intermediate biosynthesis; chorismate biosynthesis; chorismate from D-erythrose 4-phosphate and phosphoenolpyruvate: step 5/7. In terms of biological role, catalyzes the specific phosphorylation of the 3-hydroxyl group of shikimic acid using ATP as a cosubstrate. The chain is Shikimate kinase from Thiobacillus denitrificans (strain ATCC 25259 / T1).